The primary structure comprises 563 residues: Lipoprotein LpqB (563 aa).

The signal sequence occupies residues 1-19 (MRRMKALTAAMTAALLVSG). The N-palmitoyl cysteine moiety is linked to residue Cys-20. A lipid anchor (S-diacylglycerol cysteine) is attached at Cys-20.

This sequence belongs to the LpqB lipoprotein family.

Its subcellular location is the cell membrane. This chain is Lipoprotein LpqB, found in Corynebacterium efficiens (strain DSM 44549 / YS-314 / AJ 12310 / JCM 11189 / NBRC 100395).